We begin with the raw amino-acid sequence, 1471 residues long: Gag-Pol polyprotein (1471 aa).

The N-myristoyl glycine; by host moiety is linked to residue glycine 2. The segment at 7–31 (VLSGKKTDELEKVRLRPGGKKRYCL) is interaction with Gp41. Positions 16–22 (LEKVRLR) match the Nuclear export signal motif. Positions 26-32 (KKRYCLK) match the Nuclear localization signal motif. The span at 105–114 (QRHLAADTEK) shows a compositional bias: basic and acidic residues. The disordered stretch occupies residues 105-130 (QRHLAADTEKMPATSRPTAPPSGGNY). Residue tyrosine 130 is modified to Phosphotyrosine; by host. An interaction with human PPIA/CYPA and NUP153 region spans residues 186–223 (NCVGDHQAAMQIIREIINEEAADWDQQHPIPGPLPAGQ). Residues 274–360 (YNPTNILDIK…GGPGQKARLM (87 aa)) are dimerization/Multimerization of capsid protein p24. 2 CCHC-type zinc fingers span residues 388–405 (VTCW…QCRA) and 409–426 (QGCW…KCPE). The segment at 441–508 (ASQLPHDPSA…PRETLQGGDR (68 aa)) is disordered. The segment covering 484–501 (DAEKLHEDGETAEREPRE) has biased composition (basic and acidic residues). The segment at 513–517 (PQFSL) is dimerization of protease. A Peptidase A2 domain is found at 533 to 602 (EVLLDTGADD…PINIFGRNIL (70 aa)). The For protease activity; shared with dimeric partner role is filled by aspartate 537. Dimerization of protease stretches follow at residues 561–567 (GIGGFIN) and 600–612 (NILN…LNFP). The Reverse transcriptase domain maps to 656 to 846 (GQLEEAPPTN…PFKWMGYELW (191 aa)). Mg(2+) is bound by residues aspartate 721, aspartate 796, and aspartate 797. The RT 'primer grip' stretch occupies residues 838 to 846 (FKWMGYELW). The Tryptophan repeat motif motif lies at 1008-1024 (WDQWWTDYWQVTWIPEW). The RNase H type-1 domain maps to 1044–1167 (LEKVETYYTD…VDHLVSQGIR (124 aa)). Aspartate 1053, glutamate 1088, aspartate 1108, and aspartate 1159 together coordinate Mg(2+). Residues 1173 to 1214 (EKIEPAQEEHEKYHGNVKELVHKFGLPQLVAKQIVNSCDKCQ) form an Integrase-type zinc finger. The Zn(2+) site is built by histidine 1182, histidine 1186, cysteine 1210, and cysteine 1213. The Integrase catalytic domain occupies 1224–1375 (VNAELGTWQM…PAERLVNMIT (152 aa)). 3 residues coordinate Mg(2+): aspartate 1234, aspartate 1286, and glutamate 1322. The segment at residues 1393–1440 (FQVYYREGRDQLWKGPGELLWKGEGAVLIKVGTEIKVIPRRKAKIIRH) is a DNA-binding region (integrase-type).

In terms of assembly, homotrimer; further assembles as hexamers of trimers. Interacts with gp41 (via C-terminus). Interacts with host CALM1; this interaction induces a conformational change in the Matrix protein, triggering exposure of the myristate group. Interacts with host AP3D1; this interaction allows the polyprotein trafficking to multivesicular bodies during virus assembly. Part of the pre-integration complex (PIC) which is composed of viral genome, matrix protein, Vpr and integrase. As to quaternary structure, homodimer; the homodimer further multimerizes as homohexamers or homopentamers. Interacts with human PPIA/CYPA. Interacts with human NUP153. Interacts with host PDZD8; this interaction stabilizes the capsid. Interacts with monkey TRIM5; this interaction destabilizes the capsid. Homodimer, whose active site consists of two apposed aspartic acid residues. In terms of assembly, heterodimer of p66 RT and p51 RT (RT p66/p51). Heterodimerization of RT is essential for DNA polymerase activity. The overall folding of the subdomains is similar in p66 RT and p51 RT but the spatial arrangements of the subdomains are dramatically different. As to quaternary structure, homotetramer; may further associate as a homohexadecamer. Part of the pre-integration complex (PIC) which is composed of viral genome, matrix protein, Vpr and integrase. Interacts with human SMARCB1/INI1 and human PSIP1/LEDGF isoform 1. Interacts with human KPNA3; this interaction might play a role in nuclear import of the pre-integration complex. Interacts with human NUP153; this interaction might play a role in nuclear import of the pre-integration complex. It depends on Mg(2+) as a cofactor. In terms of processing, specific enzymatic cleavages by the viral protease yield mature proteins. The protease is released by autocatalytic cleavage. The polyprotein is cleaved during and after budding, this process is termed maturation. Proteolytic cleavage of p66 RT removes the RNase H domain to yield the p51 RT subunit. Nucleocapsid protein p7 might be further cleaved after virus entry.

It is found in the host cell membrane. The protein resides in the host endosome. Its subcellular location is the host multivesicular body. It localises to the virion membrane. The protein localises to the host nucleus. It is found in the host cytoplasm. The protein resides in the virion. The catalysed reaction is Endopeptidase for which the P1 residue is preferably hydrophobic.. The enzyme catalyses Endohydrolysis of RNA in RNA/DNA hybrids. Three different cleavage modes: 1. sequence-specific internal cleavage of RNA. Human immunodeficiency virus type 1 and Moloney murine leukemia virus enzymes prefer to cleave the RNA strand one nucleotide away from the RNA-DNA junction. 2. RNA 5'-end directed cleavage 13-19 nucleotides from the RNA end. 3. DNA 3'-end directed cleavage 15-20 nucleotides away from the primer terminus.. It catalyses the reaction 3'-end directed exonucleolytic cleavage of viral RNA-DNA hybrid.. It carries out the reaction DNA(n) + a 2'-deoxyribonucleoside 5'-triphosphate = DNA(n+1) + diphosphate. Its activity is regulated as follows. Protease: The viral protease is inhibited by many synthetic protease inhibitors (PIs), such as amprenavir, atazanavir, indinavir, loprinavir, nelfinavir, ritonavir and saquinavir. Use of protease inhibitors in tritherapy regimens permit more ambitious therapeutic strategies. Reverse transcriptase/ribonuclease H: RT can be inhibited either by nucleoside RT inhibitors (NRTIs) or by non nucleoside RT inhibitors (NNRTIs). NRTIs act as chain terminators, whereas NNRTIs inhibit DNA polymerization by binding a small hydrophobic pocket near the RT active site and inducing an allosteric change in this region. Classical NRTIs are abacavir, adefovir (PMEA), didanosine (ddI), lamivudine (3TC), stavudine (d4T), tenofovir (PMPA), zalcitabine (ddC), and zidovudine (AZT). Classical NNRTIs are atevirdine (BHAP U-87201E), delavirdine, efavirenz (DMP-266), emivirine (I-EBU), and nevirapine (BI-RG-587). The tritherapies used as a basic effective treatment of AIDS associate two NRTIs and one NNRTI. Its function is as follows. Mediates, with Gag polyprotein, the essential events in virion assembly, including binding the plasma membrane, making the protein-protein interactions necessary to create spherical particles, recruiting the viral Env proteins, and packaging the genomic RNA via direct interactions with the RNA packaging sequence (Psi). Gag-Pol polyprotein may regulate its own translation, by the binding genomic RNA in the 5'-UTR. At low concentration, the polyprotein would promote translation, whereas at high concentration, the polyprotein would encapsidate genomic RNA and then shut off translation. In terms of biological role, targets the polyprotein to the plasma membrane via a multipartite membrane-binding signal, that includes its myristoylated N-terminus. Matrix protein is part of the pre-integration complex. Implicated in the release from host cell mediated by Vpu. Binds to RNA. Functionally, forms the conical core that encapsulates the genomic RNA-nucleocapsid complex in the virion. Most core are conical, with only 7% tubular. The core is constituted by capsid protein hexamer subunits. The core is disassembled soon after virion entry. Host restriction factors such as TRIM5-alpha or TRIMCyp bind retroviral capsids and cause premature capsid disassembly, leading to blocks in reverse transcription. Capsid restriction by TRIM5 is one of the factors which restricts HIV-1 to the human species. Host PIN1 apparently facilitates the virion uncoating. On the other hand, interactions with PDZD8 or CYPA stabilize the capsid. Encapsulates and protects viral dimeric unspliced genomic RNA (gRNA). Binds these RNAs through its zinc fingers. Acts as a nucleic acid chaperone which is involved in rearangement of nucleic acid secondary structure during gRNA retrotranscription. Also facilitates template switch leading to recombination. As part of the polyprotein, participates in gRNA dimerization, packaging, tRNA incorporation and virion assembly. Its function is as follows. Aspartyl protease that mediates proteolytic cleavages of Gag and Gag-Pol polyproteins during or shortly after the release of the virion from the plasma membrane. Cleavages take place as an ordered, step-wise cascade to yield mature proteins. This process is called maturation. Displays maximal activity during the budding process just prior to particle release from the cell. Also cleaves Nef and Vif, probably concomitantly with viral structural proteins on maturation of virus particles. Hydrolyzes host EIF4GI and PABP1 in order to shut off the capped cellular mRNA translation. The resulting inhibition of cellular protein synthesis serves to ensure maximal viral gene expression and to evade host immune response. In terms of biological role, multifunctional enzyme that converts the viral RNA genome into dsDNA in the cytoplasm, shortly after virus entry into the cell. This enzyme displays a DNA polymerase activity that can copy either DNA or RNA templates, and a ribonuclease H (RNase H) activity that cleaves the RNA strand of RNA-DNA heteroduplexes in a partially processive 3' to 5' endonucleasic mode. Conversion of viral genomic RNA into dsDNA requires many steps. A tRNA(3)-Lys binds to the primer-binding site (PBS) situated at the 5'-end of the viral RNA. RT uses the 3' end of the tRNA primer to perform a short round of RNA-dependent minus-strand DNA synthesis. The reading proceeds through the U5 region and ends after the repeated (R) region which is present at both ends of viral RNA. The portion of the RNA-DNA heteroduplex is digested by the RNase H, resulting in a ssDNA product attached to the tRNA primer. This ssDNA/tRNA hybridizes with the identical R region situated at the 3' end of viral RNA. This template exchange, known as minus-strand DNA strong stop transfer, can be either intra- or intermolecular. RT uses the 3' end of this newly synthesized short ssDNA to perform the RNA-dependent minus-strand DNA synthesis of the whole template. RNase H digests the RNA template except for two polypurine tracts (PPTs) situated at the 5'-end and near the center of the genome. It is not clear if both polymerase and RNase H activities are simultaneous. RNase H probably can proceed both in a polymerase-dependent (RNA cut into small fragments by the same RT performing DNA synthesis) and a polymerase-independent mode (cleavage of remaining RNA fragments by free RTs). Secondly, RT performs DNA-directed plus-strand DNA synthesis using the PPTs that have not been removed by RNase H as primers. PPTs and tRNA primers are then removed by RNase H. The 3' and 5' ssDNA PBS regions hybridize to form a circular dsDNA intermediate. Strand displacement synthesis by RT to the PBS and PPT ends produces a blunt ended, linear dsDNA copy of the viral genome that includes long terminal repeats (LTRs) at both ends. Functionally, catalyzes viral DNA integration into the host chromosome, by performing a series of DNA cutting and joining reactions. This enzyme activity takes place after virion entry into a cell and reverse transcription of the RNA genome in dsDNA. The first step in the integration process is 3' processing. This step requires a complex comprising the viral genome, matrix protein, Vpr and integrase. This complex is called the pre-integration complex (PIC). The integrase protein removes 2 nucleotides from each 3' end of the viral DNA, leaving recessed CA OH's at the 3' ends. In the second step, the PIC enters cell nucleus. This process is mediated through integrase and Vpr proteins, and allows the virus to infect a non dividing cell. This ability to enter the nucleus is specific of lentiviruses, other retroviruses cannot and rely on cell division to access cell chromosomes. In the third step, termed strand transfer, the integrase protein joins the previously processed 3' ends to the 5' ends of strands of target cellular DNA at the site of integration. The 5'-ends are produced by integrase-catalyzed staggered cuts, 5 bp apart. A Y-shaped, gapped, recombination intermediate results, with the 5'-ends of the viral DNA strands and the 3' ends of target DNA strands remaining unjoined, flanking a gap of 5 bp. The last step is viral DNA integration into host chromosome. This involves host DNA repair synthesis in which the 5 bp gaps between the unjoined strands are filled in and then ligated. Since this process occurs at both cuts flanking the HIV genome, a 5 bp duplication of host DNA is produced at the ends of HIV-1 integration. Alternatively, Integrase may catalyze the excision of viral DNA just after strand transfer, this is termed disintegration. In Human immunodeficiency virus type 2 subtype B (isolate UC1) (HIV-2), this protein is Gag-Pol polyprotein (gag-pol).